The sequence spans 1463 residues: Clustered mitochondria protein homolog (1463 aa).

Positions 1-79 (MAKNKKQNGK…ETEQQQQQQE (79 aa)) are disordered. Residues 10–22 (KAKTPPVVAAAAG) show a composition bias toward low complexity. Residues 374 to 616 (RAEDTFSSKL…RTFPPDVNFL (243 aa)) form the Clu domain. Disordered regions lie at residues 684–753 (AQKT…SEDA), 942–988 (GDGQ…SVPS), and 1387–1463 (QKEA…RRKS). Residues 692 to 702 (KQAAIEAAAPA) are compositionally biased toward low complexity. The segment covering 703 to 731 (EGDKTPAKDAKDGKEAGKDANDGKEEGST) has biased composition (basic and acidic residues). Residues 955-964 (GGKKQNKQSK) are compositionally biased toward basic residues. Gly residues predominate over residues 965-980 (RGGGGGGGKGAAGGGR). Residues 1438–1456 (AEAASHTAGGAAANTAAPA) show a composition bias toward low complexity.

It belongs to the CLU family.

The protein localises to the cytoplasm. Functionally, mRNA-binding protein involved in proper cytoplasmic distribution of mitochondria. The sequence is that of Clustered mitochondria protein homolog from Anopheles gambiae (African malaria mosquito).